Reading from the N-terminus, the 267-residue chain is Acetyl-coenzyme A carboxylase carboxyl transferase subunit beta 1 (267 aa).

Residues 9–267 enclose the CoA carboxyltransferase N-terminal domain; it reads TWQACPKCGR…NYGIGRSAHG (259 aa). Positions 13, 16, 31, and 34 each coordinate Zn(2+). A C4-type zinc finger spans residues 13 to 34; the sequence is CPKCGRHVHQRQWGTYQQCPYC.

The protein belongs to the AccD/PCCB family. Acetyl-CoA carboxylase is a heterohexamer composed of biotin carboxyl carrier protein (AccB), biotin carboxylase (AccC) and two subunits each of ACCase subunit alpha (AccA) and ACCase subunit beta (AccD). Zn(2+) serves as cofactor.

The protein resides in the cytoplasm. The catalysed reaction is N(6)-carboxybiotinyl-L-lysyl-[protein] + acetyl-CoA = N(6)-biotinyl-L-lysyl-[protein] + malonyl-CoA. It functions in the pathway lipid metabolism; malonyl-CoA biosynthesis; malonyl-CoA from acetyl-CoA: step 1/1. Functionally, component of the acetyl coenzyme A carboxylase (ACC) complex. Biotin carboxylase (BC) catalyzes the carboxylation of biotin on its carrier protein (BCCP) and then the CO(2) group is transferred by the transcarboxylase to acetyl-CoA to form malonyl-CoA. This Lactiplantibacillus plantarum (strain ATCC BAA-793 / NCIMB 8826 / WCFS1) (Lactobacillus plantarum) protein is Acetyl-coenzyme A carboxylase carboxyl transferase subunit beta 1.